Consider the following 176-residue polypeptide: Large ribosomal subunit protein bL17m (176 aa).

The N-terminal 8 residues, Met1–Ala8, are a transit peptide targeting the mitochondrion.

Belongs to the bacterial ribosomal protein bL17 family. Component of the mitochondrial ribosome large subunit (39S) which comprises a 16S rRNA and about 50 distinct proteins.

The protein resides in the mitochondrion. The sequence is that of Large ribosomal subunit protein bL17m (Mrpl17) from Rattus norvegicus (Rat).